Reading from the N-terminus, the 218-residue chain is 3,4-dihydroxy-2-butanone 4-phosphate synthase (218 aa).

D-ribulose 5-phosphate contacts are provided by residues R38–E39, D43, R151–T155, and E175. E39 provides a ligand contact to Mg(2+). H154 contacts Mg(2+).

The protein belongs to the DHBP synthase family. Homodimer. Requires Mg(2+) as cofactor. Mn(2+) is required as a cofactor.

The enzyme catalyses D-ribulose 5-phosphate = (2S)-2-hydroxy-3-oxobutyl phosphate + formate + H(+). The protein operates within cofactor biosynthesis; riboflavin biosynthesis; 2-hydroxy-3-oxobutyl phosphate from D-ribulose 5-phosphate: step 1/1. In terms of biological role, catalyzes the conversion of D-ribulose 5-phosphate to formate and 3,4-dihydroxy-2-butanone 4-phosphate. The protein is 3,4-dihydroxy-2-butanone 4-phosphate synthase of Shewanella frigidimarina (strain NCIMB 400).